The sequence spans 494 residues: Probable malate:quinone oxidoreductase (494 aa).

This sequence belongs to the MQO family. FAD serves as cofactor.

It catalyses the reaction (S)-malate + a quinone = a quinol + oxaloacetate. The protein operates within carbohydrate metabolism; tricarboxylic acid cycle; oxaloacetate from (S)-malate (quinone route): step 1/1. In Kocuria rhizophila (strain ATCC 9341 / DSM 348 / NBRC 103217 / DC2201), this protein is Probable malate:quinone oxidoreductase.